A 250-amino-acid chain; its full sequence is Phosphonates import ATP-binding protein PhnC (250 aa).

The ABC transporter domain occupies 2 to 247 (ILFNNVNKVW…KLDAQAMKKI (246 aa)). An ATP-binding site is contributed by 35–42 (GLSGAGKT).

The protein belongs to the ABC transporter superfamily. Phosphonates importer (TC 3.A.1.9.1) family. The complex is composed of two ATP-binding proteins (PhnC), two transmembrane proteins (PhnE) and a solute-binding protein (PhnD).

It localises to the cell membrane. The enzyme catalyses phosphonate(out) + ATP + H2O = phosphonate(in) + ADP + phosphate + H(+). In terms of biological role, part of the ABC transporter complex PhnCDE involved in phosphonates import. Responsible for energy coupling to the transport system. The protein is Phosphonates import ATP-binding protein PhnC of Mycoplasma capricolum subsp. capricolum (strain California kid / ATCC 27343 / NCTC 10154).